The following is a 397-amino-acid chain: Ubiquitin-like modifier-activating enzyme 5 (397 aa).

G77, D98, K121, N144, and N178 together coordinate ATP. Residues C220 and C223 each contribute to the Zn(2+) site. The active-site Glycyl thioester intermediate is C244. C297 and C302 together coordinate Zn(2+).

The protein belongs to the ubiquitin-activating E1 family. UBA5 subfamily.

Functionally, E1-like enzyme which activates UFM1. The protein is Ubiquitin-like modifier-activating enzyme 5 of Culex quinquefasciatus (Southern house mosquito).